A 315-amino-acid polypeptide reads, in one-letter code: 4-hydroxy-3-methylbut-2-enyl diphosphate reductase (315 aa).

Cys-12 contributes to the [4Fe-4S] cluster binding site. The (2E)-4-hydroxy-3-methylbut-2-enyl diphosphate site is built by His-41 and His-74. Positions 41 and 74 each coordinate dimethylallyl diphosphate. Positions 41 and 74 each coordinate isopentenyl diphosphate. Cys-96 serves as a coordination point for [4Fe-4S] cluster. His-124 is a (2E)-4-hydroxy-3-methylbut-2-enyl diphosphate binding site. Residue His-124 participates in dimethylallyl diphosphate binding. Position 124 (His-124) interacts with isopentenyl diphosphate. Catalysis depends on Glu-126, which acts as the Proton donor. Position 168 (Thr-168) interacts with (2E)-4-hydroxy-3-methylbut-2-enyl diphosphate. A [4Fe-4S] cluster-binding site is contributed by Cys-198. (2E)-4-hydroxy-3-methylbut-2-enyl diphosphate contacts are provided by Ser-226, Ser-227, Asn-228, and Ser-270. Positions 226, 227, 228, and 270 each coordinate dimethylallyl diphosphate. Isopentenyl diphosphate-binding residues include Ser-226, Ser-227, Asn-228, and Ser-270.

Belongs to the IspH family. Requires [4Fe-4S] cluster as cofactor.

It carries out the reaction isopentenyl diphosphate + 2 oxidized [2Fe-2S]-[ferredoxin] + H2O = (2E)-4-hydroxy-3-methylbut-2-enyl diphosphate + 2 reduced [2Fe-2S]-[ferredoxin] + 2 H(+). It catalyses the reaction dimethylallyl diphosphate + 2 oxidized [2Fe-2S]-[ferredoxin] + H2O = (2E)-4-hydroxy-3-methylbut-2-enyl diphosphate + 2 reduced [2Fe-2S]-[ferredoxin] + 2 H(+). Its pathway is isoprenoid biosynthesis; dimethylallyl diphosphate biosynthesis; dimethylallyl diphosphate from (2E)-4-hydroxy-3-methylbutenyl diphosphate: step 1/1. The protein operates within isoprenoid biosynthesis; isopentenyl diphosphate biosynthesis via DXP pathway; isopentenyl diphosphate from 1-deoxy-D-xylulose 5-phosphate: step 6/6. Functionally, catalyzes the conversion of 1-hydroxy-2-methyl-2-(E)-butenyl 4-diphosphate (HMBPP) into a mixture of isopentenyl diphosphate (IPP) and dimethylallyl diphosphate (DMAPP). Acts in the terminal step of the DOXP/MEP pathway for isoprenoid precursor biosynthesis. The polypeptide is 4-hydroxy-3-methylbut-2-enyl diphosphate reductase (Pseudomonas fluorescens (strain SBW25)).